The sequence spans 369 residues: Chorismate synthase (369 aa).

Residues R48 and R54 each contribute to the NADP(+) site. FMN is bound by residues 125 to 127 (RSS), 238 to 239 (NA), G278, 293 to 297 (KPTSS), and R319.

Belongs to the chorismate synthase family. In terms of assembly, homotetramer. Requires FMNH2 as cofactor.

It catalyses the reaction 5-O-(1-carboxyvinyl)-3-phosphoshikimate = chorismate + phosphate. It functions in the pathway metabolic intermediate biosynthesis; chorismate biosynthesis; chorismate from D-erythrose 4-phosphate and phosphoenolpyruvate: step 7/7. Catalyzes the anti-1,4-elimination of the C-3 phosphate and the C-6 proR hydrogen from 5-enolpyruvylshikimate-3-phosphate (EPSP) to yield chorismate, which is the branch point compound that serves as the starting substrate for the three terminal pathways of aromatic amino acid biosynthesis. This reaction introduces a second double bond into the aromatic ring system. This Burkholderia thailandensis (strain ATCC 700388 / DSM 13276 / CCUG 48851 / CIP 106301 / E264) protein is Chorismate synthase.